We begin with the raw amino-acid sequence, 346 residues long: Phosphate acyltransferase (346 aa).

This sequence belongs to the PlsX family. In terms of assembly, homodimer. Probably interacts with PlsY.

It localises to the cytoplasm. The enzyme catalyses a fatty acyl-[ACP] + phosphate = an acyl phosphate + holo-[ACP]. The protein operates within lipid metabolism; phospholipid metabolism. In terms of biological role, catalyzes the reversible formation of acyl-phosphate (acyl-PO(4)) from acyl-[acyl-carrier-protein] (acyl-ACP). This enzyme utilizes acyl-ACP as fatty acyl donor, but not acyl-CoA. The polypeptide is Phosphate acyltransferase (Synechococcus elongatus (strain ATCC 33912 / PCC 7942 / FACHB-805) (Anacystis nidulans R2)).